The sequence spans 123 residues: Histone H1-like protein HC1 (123 aa).

The interval isoleucine 54–lysine 123 is disordered. The segment covering leucine 61–lysine 75 has biased composition (basic residues). Positions lysine 85–proline 102 are enriched in low complexity. A compositionally biased stretch (basic residues) spans alanine 103–lysine 123.

The protein belongs to the histone H1/H5 family. HCT subfamily.

Its function is as follows. Might have a role analogous to that of eukaryotic histone proteins. This chain is Histone H1-like protein HC1 (hctA), found in Chlamydia pneumoniae (Chlamydophila pneumoniae).